The sequence spans 565 residues: MDLEHESKRPLYIPYAGPILLEFPLLNKGSAFSEEERNTFNLNGLLPEAIETIEEQVERAYRQFCDFHSATEQHIYLRNIQDTNETLFYRLLRSHLSEMMPIIYTPTVGEACEHFSYIYRRARGLFIAYPNRDRIDDMLQNATKQNVKVIVVTDGERILGLGDQGIGGMGIPIGKLSLYTACGGISPAYTLPVVLDVGTNNPQRLNDPLYMGWRHPRITGDEYNAFVEEFIQAVKRRWPDVLLQFEDFAQKNAMPLLSRYRDRLCCFNDDIQGTAAVTLGSLIAASHAAGSRLRDQTITFLGAGSAGCGIAEQIIAQMIAEGLSDEEARTRIFMVDRFGLLTDRLPNLLDFQSRLVQKRQALAGWQTESEGISLLDVVRNAHPTVLIGVSGQPGLFSEAIVREMHSHCPRPIIMPLSNPTSRVEARPEDIINWTDGAALVASGSPFEPVLYQGERYPIAQCNNAYIFPGIGLGVLASGARRVTDGMLMAASRALADSSPLARDGHGSLLPDLKDIQQVSRDIAFQVAKAAQRQGVAVQTSDEALLQAIEHNFWLPIYRSYKRTSF.

Tyrosine 104 functions as the Proton donor in the catalytic mechanism. Arginine 157 provides a ligand contact to NAD(+). The active-site Proton acceptor is the lysine 175. A divalent metal cation contacts are provided by glutamate 246, aspartate 247, and aspartate 270. Positions 270 and 418 each coordinate NAD(+).

The protein belongs to the malic enzymes family. As to quaternary structure, homotetramer. The cofactor is Mg(2+). It depends on Mn(2+) as a cofactor.

The catalysed reaction is (S)-malate + NAD(+) = pyruvate + CO2 + NADH. The enzyme catalyses oxaloacetate + H(+) = pyruvate + CO2. This Edwardsiella ictaluri (strain 93-146) protein is NAD-dependent malic enzyme.